The primary structure comprises 429 residues: Glucose-1-phosphate adenylyltransferase (429 aa).

Residues glycine 162, 177-178 (EK), and serine 209 each bind alpha-D-glucose 1-phosphate.

The protein belongs to the bacterial/plant glucose-1-phosphate adenylyltransferase family. In terms of assembly, homotetramer.

It catalyses the reaction alpha-D-glucose 1-phosphate + ATP + H(+) = ADP-alpha-D-glucose + diphosphate. Its pathway is glycan biosynthesis; glycogen biosynthesis. Functionally, involved in the biosynthesis of ADP-glucose, a building block required for the elongation reactions to produce glycogen. Catalyzes the reaction between ATP and alpha-D-glucose 1-phosphate (G1P) to produce pyrophosphate and ADP-Glc. In Cyanothece sp. (strain PCC 7425 / ATCC 29141), this protein is Glucose-1-phosphate adenylyltransferase.